The following is a 262-amino-acid chain: MSQPAELSREENVYMAKLAEQAERYEEMVEFMEKVAKTVDSEELTVEERNLLSVAYKNVIGARRASWRIISSIEQKEESRGNEDRCTLIKEYRGKIETELSKICDGILKLLDSHLVPSSTAPESKVFYLKMKGDYYRYLAEFKTGAERKDAAENTMVAYKAAQDIALAELPPTHPIRLGLALNFSVFYYEILNSPDRACNLAKQAFDEAISELDTLSEESYKDSTLIMQLLRDNLTLWTSDISEDAAEEIKEAPKGESGDGQ.

This sequence belongs to the 14-3-3 family. As to expression, ubiquitous.

Its subcellular location is the cytoplasm. The protein resides in the nucleus. Is associated with a DNA binding complex that binds to the G box, a well-characterized cis-acting DNA regulatory element found in plant genes. This is 14-3-3-like protein GF14-E (GF14E) from Oryza sativa subsp. japonica (Rice).